Reading from the N-terminus, the 637-residue chain is Early transcription factor 70 kDa subunit (637 aa).

In terms of domain architecture, Helicase ATP-binding spans 32–185 (RTIIDENRSV…GHIIDLMSEE (154 aa)). 45–52 (HIMGSGKT) is an ATP binding site. The DEXH box signature appears at 135-138 (DEAH). In terms of domain architecture, Helicase C-terminal spans 327 to 507 (KFKYFINRIQ…VLPFDIKKLL (181 aa)).

It belongs to the helicase family. VETF subfamily. In terms of assembly, heterodimer of a 70 kDa and a 82 kDa subunit. Part of the early transcription complex composed of ETF, RAP94/OPG109, and the DNA-directed RNA polymerase.

It is found in the virion. In terms of biological role, acts with RNA polymerase to initiate transcription from early gene promoters. Is recruited by the RPO-associated protein of 94 kDa RAP94/OPG109 to form the early transcription complex, which also contains the core RNA polymerase. ETF heterodimer binds to early gene promoters. This chain is Early transcription factor 70 kDa subunit (OPG118), found in Homo sapiens (Human).